Consider the following 243-residue polypeptide: Probable fructoselysine utilization operon transcriptional repressor (243 aa).

The HTH gntR-type domain maps to 10 to 78 (QLLYATVRQR…QGKGTFVQSQ (69 aa)). Positions 38 to 57 (ENELCTQYNVSRITIRKAIS) form a DNA-binding region, H-T-H motif.

It functions in the pathway carbohydrate metabolism; fructoselysine degradation [regulation]. Functionally, may regulate the transcription of the frlABCDR operon, involved in the utilization of fructoselysine and psicoselysine. In Escherichia coli (strain K12), this protein is Probable fructoselysine utilization operon transcriptional repressor.